The following is a 30-amino-acid chain: FVVETENQLMSQGGRYYILPVIYGKGGGLG.

It belongs to the protease inhibitor I3 (leguminous Kunitz-type inhibitor) family.

Functionally, potent inhibitor of serine proteases plasma kallikrein, plasmin and coagulation factor XIIa. Weak inhibitor of serine proteases trypsin and coagulation factor Xa. Does not inhibit the serine proteases chymotrypsin, elastase or thrombin. Inhibits kinin release from HMW-kininogen by kallikrein in vitro. The protein is Proteinase inhibitor CeKI of Paubrasilia echinata (Pau Brasil).